Reading from the N-terminus, the 778-residue chain is Phenylalanine--tRNA ligase beta subunit (778 aa).

Residues 39–150 (YEVPQKIVFG…GKYKIGEEVS (112 aa)) enclose the tRNA-binding domain. The 77-residue stretch at 391–467 (HEDKIISLNK…RLVGIDNIPS (77 aa)) folds into the B5 domain. Mg(2+)-binding residues include Asp445, Asp451, Glu454, and Glu455. The FDX-ACB domain maps to 686–778 (SKYQASFRDL…LKNQLGVGIR (93 aa)).

This sequence belongs to the phenylalanyl-tRNA synthetase beta subunit family. Type 1 subfamily. As to quaternary structure, tetramer of two alpha and two beta subunits. The cofactor is Mg(2+).

The protein localises to the cytoplasm. It catalyses the reaction tRNA(Phe) + L-phenylalanine + ATP = L-phenylalanyl-tRNA(Phe) + AMP + diphosphate + H(+). The sequence is that of Phenylalanine--tRNA ligase beta subunit from Sulfurimonas denitrificans (strain ATCC 33889 / DSM 1251) (Thiomicrospira denitrificans (strain ATCC 33889 / DSM 1251)).